The sequence spans 263 residues: uncharacterized protein (263 aa).

To B.subtilis soj.

This is an uncharacterized protein from Pseudomonas putida (strain ATCC 47054 / DSM 6125 / CFBP 8728 / NCIMB 11950 / KT2440).